The primary structure comprises 367 residues: tRNA-specific 2-thiouridylase MnmA (367 aa).

ATP-binding positions include 12 to 19 and Met-38; that span reads GMSGGVDS. The segment at 98–100 is interaction with target base in tRNA; the sequence is NPD. The active-site Nucleophile is the Cys-103. Cys-103 and Cys-200 are oxidised to a cystine. Gly-128 is an ATP binding site. Residues 150–152 are interaction with tRNA; sequence KDQ. The active-site Cysteine persulfide intermediate is Cys-200. The interaction with tRNA stretch occupies residues 312–313; that stretch reads RY.

This sequence belongs to the MnmA/TRMU family. Interacts with TusE.

The protein resides in the cytoplasm. It catalyses the reaction S-sulfanyl-L-cysteinyl-[protein] + uridine(34) in tRNA + AH2 + ATP = 2-thiouridine(34) in tRNA + L-cysteinyl-[protein] + A + AMP + diphosphate + H(+). In terms of biological role, catalyzes the 2-thiolation of uridine at the wobble position (U34) of tRNA(Lys), tRNA(Glu) and tRNA(Gln), leading to the formation of s(2)U34, the first step of tRNA-mnm(5)s(2)U34 synthesis. Sulfur is provided by IscS, via a sulfur-relay system. Binds ATP and its substrate tRNAs. The polypeptide is tRNA-specific 2-thiouridylase MnmA (Blochmanniella pennsylvanica (strain BPEN)).